The chain runs to 123 residues: Ribonuclease P protein component 1 (123 aa).

Positions 73–93 (PDNGVGTAFKPAGGETRQTTG) are disordered.

The protein belongs to the eukaryotic/archaeal RNase P protein component 1 family. In terms of assembly, consists of a catalytic RNA component and at least 4-5 protein subunits.

The protein resides in the cytoplasm. The enzyme catalyses Endonucleolytic cleavage of RNA, removing 5'-extranucleotides from tRNA precursor.. Functionally, part of ribonuclease P, a protein complex that generates mature tRNA molecules by cleaving their 5'-ends. In Halobacterium salinarum (strain ATCC 29341 / DSM 671 / R1), this protein is Ribonuclease P protein component 1.